The sequence spans 401 residues: Acetate kinase (401 aa).

Position 7 (Asn7) interacts with Mg(2+). Lys14 contributes to the ATP binding site. Residue Arg91 coordinates substrate. The active-site Proton donor/acceptor is the Asp148. ATP is bound by residues 208 to 212 (HLGNG), 283 to 285 (DFR), and 332 to 336 (GVGEN). Glu385 lines the Mg(2+) pocket.

This sequence belongs to the acetokinase family. In terms of assembly, homodimer. Mg(2+) serves as cofactor. The cofactor is Mn(2+).

The protein resides in the cytoplasm. The enzyme catalyses acetate + ATP = acetyl phosphate + ADP. The protein operates within metabolic intermediate biosynthesis; acetyl-CoA biosynthesis; acetyl-CoA from acetate: step 1/2. Catalyzes the formation of acetyl phosphate from acetate and ATP. Can also catalyze the reverse reaction. This chain is Acetate kinase, found in Thermoanaerobacter pseudethanolicus (strain ATCC 33223 / 39E) (Clostridium thermohydrosulfuricum).